Consider the following 157-residue polypeptide: MKVLEGAVAAPNAKIAVVIARFNSFINESLLEGALDALKRLGQVKEENITLVRVPGAYELPLVARRLAESKKYDGIVALGTVIRGGTAHFEYVAGEASSGLGQVAMNADIPVAFGVLTTENIEQAIERAGTKAGNKGAEAALVALEMVNLLAQIDAA.

5-amino-6-(D-ribitylamino)uracil-binding positions include Phe-22, 57-59 (AYE), and 81-83 (TVI). 86–87 (GT) contacts (2S)-2-hydroxy-3-oxobutyl phosphate. His-89 serves as the catalytic Proton donor. Residue Phe-114 coordinates 5-amino-6-(D-ribitylamino)uracil. Arg-128 serves as a coordination point for (2S)-2-hydroxy-3-oxobutyl phosphate.

The protein belongs to the DMRL synthase family. Forms an icosahedral capsid composed of 60 subunits, arranged as a dodecamer of pentamers.

The catalysed reaction is (2S)-2-hydroxy-3-oxobutyl phosphate + 5-amino-6-(D-ribitylamino)uracil = 6,7-dimethyl-8-(1-D-ribityl)lumazine + phosphate + 2 H2O + H(+). The protein operates within cofactor biosynthesis; riboflavin biosynthesis; riboflavin from 2-hydroxy-3-oxobutyl phosphate and 5-amino-6-(D-ribitylamino)uracil: step 1/2. Functionally, catalyzes the formation of 6,7-dimethyl-8-ribityllumazine by condensation of 5-amino-6-(D-ribitylamino)uracil with 3,4-dihydroxy-2-butanone 4-phosphate. This is the penultimate step in the biosynthesis of riboflavin. The protein is 6,7-dimethyl-8-ribityllumazine synthase of Pasteurella multocida (strain Pm70).